Reading from the N-terminus, the 380-residue chain is Cytochrome b (380 aa).

4 helical membrane-spanning segments follow: residues 33 to 53 (FGSL…FLAM), 77 to 98 (WLIR…YMHI), 113 to 133 (WNIG…GYVL), and 178 to 198 (FFAF…LHLL). Residues His83 and His97 each coordinate heme b. Heme b contacts are provided by His182 and His196. An a ubiquinone-binding site is contributed by His201. Helical transmembrane passes span 226 to 246 (YKDL…ALFA), 288 to 308 (LGGV…PFLH), 320 to 340 (LTQM…WIGG), and 347 to 367 (FIII…VLFP).

Belongs to the cytochrome b family. As to quaternary structure, the cytochrome bc1 complex contains 3 respiratory subunits (MT-CYB, CYC1 and UQCRFS1), 2 core proteins (UQCRC1 and UQCRC2) and probably 6 low-molecular weight proteins. The cofactor is heme b.

The protein localises to the mitochondrion inner membrane. Functionally, component of the ubiquinol-cytochrome c reductase complex (complex III or cytochrome b-c1 complex) that is part of the mitochondrial respiratory chain. The b-c1 complex mediates electron transfer from ubiquinol to cytochrome c. Contributes to the generation of a proton gradient across the mitochondrial membrane that is then used for ATP synthesis. This is Cytochrome b (mt-cyb) from Gadus morhua (Atlantic cod).